The primary structure comprises 435 residues: MALVNNPIQAFANVALLFAVQILIPAFLIITTPKYSWLRYFGIPCIAFPAYLIFQLAPTLSNSIFHNSFLACEGILVVAHCVNLLLILQDGGLTWSDLRRSGVAGEKSETPPDATFLRKLISAVRLVVSLRGVDTPWEAKNTPPHPSSLGPGGGSRASFLIRQGAILAWQYLFLDVLLEVTKQEPPENTDKFYRPGMEYEYLNLTAEERFIRAFMPFVSWFVVSRLLLDSTWRALSILFVASGLGSPQSWRPLFGSMWDAYTLRNFWGKFWHQILRWPFTSNVNFLTRRVVKLPVPSLLDRYTNNFLVFLLSGILHAVSANIMGLSAVESGSIPYFSSFALGMMLEDGVQAFYNRLHADKERKTGIWKKVVGFIWVVFWMSLTSPWYMFPSRRKVAGEAAWVLPFNLTEVIGMPMMWGLLGTFGMLVKWAFGTSL.

3 consecutive transmembrane segments (helical) span residues 10–30 (AFANVALLFAVQILIPAFLII), 40–60 (YFGIPCIAFPAYLIFQLAPTL), and 68–88 (SFLACEGILVVAHCVNLLLIL). N-linked (GlcNAc...) asparagine glycosylation occurs at asparagine 203. Helical transmembrane passes span 306 to 326 (FLVFLLSGILHAVSANIMGLS), 333 to 353 (IPYFSSFALGMMLEDGVQAFY), and 370 to 390 (VVGFIWVVFWMSLTSPWYMFP). The N-linked (GlcNAc...) asparagine glycan is linked to asparagine 406. Residues 407–427 (LTEVIGMPMMWGLLGTFGMLV) form a helical membrane-spanning segment.

Belongs to the wax synthase family.

The protein localises to the membrane. The protein operates within secondary metabolite biosynthesis; terpenoid biosynthesis. Functionally, acetyltransferase; part of the gene cluster that mediates the biosynthesis of the meroterpenoids arthripenoids. The pathway begins with the HR-PKS atnH that catalyzes two chain-extension steps to form a reduced triketide, which then primes the SAT domain in the NR-PKS atnG to initiate three more cycles of extension to give a linear hexaketide corresponding to the polyketide part of arthripenoids. The FAD-dependent monooxygenase atnJ then performs an oxidative decarboxylation at C11 of the atnH/atnG product, via an electrophilic aromatic hydroxylation with concomitant ipso-decarboxylation. The membrane-bound polyprenyl transferase atnF then introduces a farnesyl group before the FAD-dependent monooxygenase atnK functions as the first epoxidase on terminal C12'-C13' olefin, followed by a second epoxidation on C7'-C8' catalyzed by atnA. The terpene cyclase/mutase atnI then initiates the sequential tricyclic ring formation through protonation of the terminal epoxide and catalyzes the regioselective and stereoselective 6/6/6-tricyclic ring formation. The cytochrome P450 monooxygenase atnM is responsible for hydroxylating both C1' and C10'. The next steps may involve ketoreduction and acetyl transfer by the ketoreductase atnB and the acetyltransferase atnC, and lead to the production of arthripenoid B, the final biosynthetic product of the atn cluster. The hydroquinone moiety in arthripenoid B is prone to undergo spontaneous oxidation to afford a benzoquinone compound, a key intermediate for generating structure diversity. For instance, addition of a cysteine followed by ring contraction gives arthripenoid A, tautomerization gives the main product arthripenoid C, addition of a molecular of water or amine affords arthripenoid D or E, respectively, and loss of one water forms arthripenoid F. This chain is Acetyltransferase atnC, found in Arthrinium sp.